The primary structure comprises 271 residues: Type III pantothenate kinase (271 aa).

6-13 (DVRNTHTV) serves as a coordination point for ATP. Substrate is bound at residue 109–112 (GADR). The active-site Proton acceptor is the aspartate 111. Aspartate 131 provides a ligand contact to K(+). Residue serine 134 participates in ATP binding. Residue threonine 186 participates in substrate binding.

Belongs to the type III pantothenate kinase family. Homodimer. It depends on NH4(+) as a cofactor. K(+) serves as cofactor.

The protein localises to the cytoplasm. The catalysed reaction is (R)-pantothenate + ATP = (R)-4'-phosphopantothenate + ADP + H(+). Its pathway is cofactor biosynthesis; coenzyme A biosynthesis; CoA from (R)-pantothenate: step 1/5. Functionally, catalyzes the phosphorylation of pantothenate (Pan), the first step in CoA biosynthesis. This Mycolicibacterium vanbaalenii (strain DSM 7251 / JCM 13017 / BCRC 16820 / KCTC 9966 / NRRL B-24157 / PYR-1) (Mycobacterium vanbaalenii) protein is Type III pantothenate kinase.